The following is a 481-amino-acid chain: Glutamate mutase epsilon subunit (481 aa).

Position 67 (Arg-67) interacts with L-glutamate. Gly-69 provides a ligand contact to adenosylcob(III)alamin. An L-glutamate-binding site is contributed by Arg-99. Asn-122 lines the adenosylcob(III)alamin pocket. Residues 148 to 149 (RH), Glu-170, and Tyr-176 contribute to the L-glutamate site. Residue Pro-179 coordinates adenosylcob(III)alamin. Tyr-180 lines the L-glutamate pocket. Residues Phe-296, Lys-325, Glu-329, and Ile-333 each coordinate adenosylcob(III)alamin.

This sequence belongs to the methylaspartate mutase GlmE subunit family. Heterotetramer composed of 2 epsilon subunits (GlmE) and 2 sigma subunits (GlmS). GlmE exists as a homodimer and GlmS as a monomer. Requires adenosylcob(III)alamin as cofactor.

The catalysed reaction is (2S,3S)-3-methyl-L-aspartate = L-glutamate. Its pathway is amino-acid degradation; L-glutamate degradation via mesaconate pathway; acetate and pyruvate from L-glutamate: step 1/4. Functionally, catalyzes the carbon skeleton rearrangement of L-glutamate to L-threo-3-methylaspartate ((2S,3S)-3-methylaspartate). The protein is Glutamate mutase epsilon subunit of Escherichia coli O157:H7.